A 266-amino-acid polypeptide reads, in one-letter code: MPDWVLAIILGVVEGLTEFIPVSSTGHILLLGHFLGFHSTGKVFEVMIQLGAILAVISVYFGRLWSVATHLHTDPAARRFVASIVLAFLPAGFAGFLLHDYIKAVLFETPAVICVSLILGGFALLAVDRIQREPVYTDAGAFPLKTAFIIGLFQCLALIPGVSRSGATVAGALLMRCDKRSAAEFSFFLAMPTMAGAFTVDLAKNYKLLSADDAGIIALGFVCALVAAIITVRKVVDFVGRHGFAPFAWWRIAVGALGLLGLAFIG.

Helical transmembrane passes span tryptophan 4 to serine 24, glycine 41 to phenylalanine 61, phenylalanine 80 to aspartate 100, valine 105 to leucine 125, alanine 139 to isoleucine 159, alanine 182 to leucine 202, aspartate 212 to valine 232, and alanine 245 to isoleucine 265.

Belongs to the UppP family.

It localises to the cell inner membrane. It carries out the reaction di-trans,octa-cis-undecaprenyl diphosphate + H2O = di-trans,octa-cis-undecaprenyl phosphate + phosphate + H(+). Functionally, catalyzes the dephosphorylation of undecaprenyl diphosphate (UPP). Confers resistance to bacitracin. This Phenylobacterium zucineum (strain HLK1) protein is Undecaprenyl-diphosphatase.